Consider the following 704-residue polypeptide: Elongation factor G (704 aa).

The tr-type G domain occupies 8 to 291 (DKVRNIGIMA…AVVDYLASPL (284 aa)). Residues 17 to 24 (AHIDAGKT), 90 to 94 (DTPGH), and 144 to 147 (NKMD) contribute to the GTP site.

It belongs to the TRAFAC class translation factor GTPase superfamily. Classic translation factor GTPase family. EF-G/EF-2 subfamily.

The protein resides in the cytoplasm. Functionally, catalyzes the GTP-dependent ribosomal translocation step during translation elongation. During this step, the ribosome changes from the pre-translocational (PRE) to the post-translocational (POST) state as the newly formed A-site-bound peptidyl-tRNA and P-site-bound deacylated tRNA move to the P and E sites, respectively. Catalyzes the coordinated movement of the two tRNA molecules, the mRNA and conformational changes in the ribosome. The protein is Elongation factor G of Chlorobium luteolum (strain DSM 273 / BCRC 81028 / 2530) (Pelodictyon luteolum).